The primary structure comprises 260 residues: F-actin-capping protein subunit beta (260 aa).

It belongs to the F-actin-capping protein beta subunit family. In terms of assembly, component of the F-actin capping complex, composed of a heterodimer of an alpha and a beta subunit.

The protein resides in the cytoplasm. It is found in the cytoskeleton. Its subcellular location is the actin patch. Functionally, F-actin-capping proteins bind in a Ca(2+)-independent manner to the fast growing ends of actin filaments (barbed end) thereby blocking the exchange of subunits at these ends. Unlike other capping proteins (such as gelsolin and severin), these proteins do not sever actin filaments. The polypeptide is F-actin-capping protein subunit beta (CAP2) (Yarrowia lipolytica (strain CLIB 122 / E 150) (Yeast)).